The primary structure comprises 353 residues: Histidine biosynthesis bifunctional protein HisB (353 aa).

Residues 1–164 (MKNKILFIDR…HITKYIIKHN (164 aa)) form a histidinol-phosphatase region. Asp9 functions as the Nucleophile in the catalytic mechanism. Asp9 and Asp11 together coordinate Mg(2+). Asp11 acts as the Proton donor in catalysis. The Zn(2+) site is built by Cys93, His95, Cys101, and Cys103. Position 128 (Asp128) interacts with Mg(2+). The segment at 165–353 (RYAEIIRRTK…NMLPTSKGIL (189 aa)) is imidazoleglycerol-phosphate dehydratase.

The protein in the N-terminal section; belongs to the histidinol-phosphatase family. It in the C-terminal section; belongs to the imidazoleglycerol-phosphate dehydratase family. Mg(2+) is required as a cofactor. Requires Zn(2+) as cofactor.

It localises to the cytoplasm. The catalysed reaction is D-erythro-1-(imidazol-4-yl)glycerol 3-phosphate = 3-(imidazol-4-yl)-2-oxopropyl phosphate + H2O. It carries out the reaction L-histidinol phosphate + H2O = L-histidinol + phosphate. The protein operates within amino-acid biosynthesis; L-histidine biosynthesis; L-histidine from 5-phospho-alpha-D-ribose 1-diphosphate: step 6/9. It participates in amino-acid biosynthesis; L-histidine biosynthesis; L-histidine from 5-phospho-alpha-D-ribose 1-diphosphate: step 8/9. This chain is Histidine biosynthesis bifunctional protein HisB, found in Buchnera aphidicola subsp. Acyrthosiphon pisum (strain Tuc7).